Consider the following 352-residue polypeptide: Small ribosomal subunit biogenesis GTPase RsgA (352 aa).

The segment covering 1 to 15 (MTKRKLTQNQKRRIH) has biased composition (basic residues). The interval 1–26 (MTKRKLTQNQKRRIHSNNVKALDRHH) is disordered. One can recognise a CP-type G domain in the interval 106-274 (ENEIARPDYY…LIDSPGIREF (169 aa)). Residues 162-165 (NKVD) and 216-224 (GQSGVGKSS) each bind GTP. 4 residues coordinate Zn(2+): Cys-298, Cys-303, His-305, and Cys-311.

The protein belongs to the TRAFAC class YlqF/YawG GTPase family. RsgA subfamily. Monomer. Associates with 30S ribosomal subunit, binds 16S rRNA. Zn(2+) is required as a cofactor.

It is found in the cytoplasm. One of several proteins that assist in the late maturation steps of the functional core of the 30S ribosomal subunit. Helps release RbfA from mature subunits. May play a role in the assembly of ribosomal proteins into the subunit. Circularly permuted GTPase that catalyzes slow GTP hydrolysis, GTPase activity is stimulated by the 30S ribosomal subunit. This Mannheimia succiniciproducens (strain KCTC 0769BP / MBEL55E) protein is Small ribosomal subunit biogenesis GTPase RsgA.